The following is a 34-amino-acid chain: Protamine-Z1/Z2 (34 aa).

Positions 1-34 (PRRRRRSSRPVRRRRRYRRSTAARRRRRVVRRRR) are disordered.

As to expression, testis.

Its subcellular location is the nucleus. It is found in the chromosome. Functionally, protamines substitute for histones in the chromatin of sperm during the haploid phase of spermatogenesis. They compact sperm DNA into a highly condensed, stable and inactive complex. The sequence is that of Protamine-Z1/Z2 from Sarda orientalis (Striped bonito).